Reading from the N-terminus, the 206-residue chain is Thiamine-phosphate synthase (206 aa).

4-amino-2-methyl-5-(diphosphooxymethyl)pyrimidine contacts are provided by residues 36–40 (QLRMK) and asparagine 68. Residues aspartate 69 and aspartate 88 each coordinate Mg(2+). Residue serine 106 participates in 4-amino-2-methyl-5-(diphosphooxymethyl)pyrimidine binding. Residue 132–134 (TNT) coordinates 2-[(2R,5Z)-2-carboxy-4-methylthiazol-5(2H)-ylidene]ethyl phosphate. Lysine 135 is a 4-amino-2-methyl-5-(diphosphooxymethyl)pyrimidine binding site. 2-[(2R,5Z)-2-carboxy-4-methylthiazol-5(2H)-ylidene]ethyl phosphate is bound by residues glycine 162 and 182–183 (VS).

This sequence belongs to the thiamine-phosphate synthase family. Mg(2+) is required as a cofactor.

It carries out the reaction 2-[(2R,5Z)-2-carboxy-4-methylthiazol-5(2H)-ylidene]ethyl phosphate + 4-amino-2-methyl-5-(diphosphooxymethyl)pyrimidine + 2 H(+) = thiamine phosphate + CO2 + diphosphate. The enzyme catalyses 2-(2-carboxy-4-methylthiazol-5-yl)ethyl phosphate + 4-amino-2-methyl-5-(diphosphooxymethyl)pyrimidine + 2 H(+) = thiamine phosphate + CO2 + diphosphate. It catalyses the reaction 4-methyl-5-(2-phosphooxyethyl)-thiazole + 4-amino-2-methyl-5-(diphosphooxymethyl)pyrimidine + H(+) = thiamine phosphate + diphosphate. It participates in cofactor biosynthesis; thiamine diphosphate biosynthesis; thiamine phosphate from 4-amino-2-methyl-5-diphosphomethylpyrimidine and 4-methyl-5-(2-phosphoethyl)-thiazole: step 1/1. Its function is as follows. Condenses 4-methyl-5-(beta-hydroxyethyl)thiazole monophosphate (THZ-P) and 2-methyl-4-amino-5-hydroxymethyl pyrimidine pyrophosphate (HMP-PP) to form thiamine monophosphate (TMP). The chain is Thiamine-phosphate synthase from Methanococcus vannielii (strain ATCC 35089 / DSM 1224 / JCM 13029 / OCM 148 / SB).